Consider the following 675-residue polypeptide: MDYEDNLEAPVWDELNHEGDKTQSLVSNSIESIGQISTNEERKDNELLETTASFADKIDLDSAPEWKDPGLSVAGNPQLEEHDNSKADDLINSLAPEQDPIADLKNSTTQFIATRESGGALFTGNANSPLVFDDTIYDANTSPNTSKSISGRRSGKPRILFDSARAQRNSKRNHSLKAKRTTASDDTIKTPFTDPLKKAEKENEFVEEPLDDRNERRENNEGKFTASVEKNILEQVDRPLYNLPQTGANISSPAEVEENSEKFGKTKIGSKVPPTEKAVAFKVEVKDPVKVGELTSIHVEYTVISESSLLELKYAQVSRRYRDFRWLYRQLQNNHWGKVIPPPPEKQSVGSFKENFIENRRFQMESMLKKICQDPVLQKDKDFLLFLTSDDFSSESKKRAFLTGSGAINDSNDLSEVRISEIQLLGAEDAAEVLKNGGIDAESHKGFMSISFSSLPKYNEADEFFIEKKQKIDELEDNLKKLSKSLEMVDTSRNTLAASTEEFSSMVETLASLNVSEPNSELLNNFADVHKSIKSSLERSSLQETLTMGVMLDDYIRSLASVKAIFNQRSKLGYFLVVIENDMNKKHSQLGKLGQNIHSEKFREMRKEFQTLERRYNLTKKQWQAVGDKIKDEFQGFSTDKIREFRNGMEISLEAAIESQKECIELWETFYQTNL.

Disordered regions lie at residues 1-26 (MDYEDNLEAPVWDELNHEGDKTQSLV), 65-84 (EWKDPGLSVAGNPQLEEHDN), and 165-219 (RAQR…RREN). Residues 168 to 180 (RNSKRNHSLKAKR) show a composition bias toward basic residues. Residues 195 to 204 (PLKKAEKENE) are compositionally biased toward basic and acidic residues. In terms of domain architecture, PX spans 279–394 (VAFKVEVKDP…LFLTSDDFSS (116 aa)). Positions 320, 346, and 360 each coordinate a 1,2-diacyl-sn-glycero-3-phospho-(1D-myo-inositol-3-phosphate).

The protein belongs to the sorting nexin family. As to quaternary structure, component of the retromer complex which consists of VPS29, VPS26, VPS35, VPS5 and VPS17. Component of a retromer subcomplex consisting of VPSD5 and VPS17. In terms of processing, phosphorylated on serine residue(s).

It localises to the cytoplasm. The protein resides in the golgi apparatus membrane. The protein localises to the endosome membrane. In terms of biological role, plays a role in vesicular protein sorting. Required for retention of late Golgi membrane proteins and vacuolar biogenesis. Component of the membrane-associated retromer complex which is essential in endosome-to-Golgi retrograde transport. The VPS5-VPS17 subcomplex may assemble onto the membrane to promote vesicle formation. This is Vacuolar protein sorting-associated protein 5 (VPS5) from Saccharomyces cerevisiae (strain ATCC 204508 / S288c) (Baker's yeast).